The sequence spans 359 residues: DNA integrity scanning protein DisA (359 aa).

Residues 7–146 (DDIFRATLAA…GRRYVLDGSA (140 aa)) enclose the DAC domain. ATP contacts are provided by residues Gly-74, Leu-92, and 105–109 (TRHRT).

The protein belongs to the DisA family. Homooctamer. It depends on Mg(2+) as a cofactor.

It carries out the reaction 2 ATP = 3',3'-c-di-AMP + 2 diphosphate. Participates in a DNA-damage check-point that is active prior to asymmetric division when DNA is damaged. DisA forms globular foci that rapidly scan along the chromosomes during sporulation, searching for lesions. When a lesion is present, DisA pauses at the lesion site. This triggers a cellular response that culminates in a temporary block in sporulation initiation. In terms of biological role, also has diadenylate cyclase activity, catalyzing the condensation of 2 ATP molecules into cyclic di-AMP (c-di-AMP). c-di-AMP acts as a signaling molecule that couples DNA integrity with progression of sporulation. The rise in c-di-AMP level generated by DisA while scanning the chromosome, operates as a positive signal that advances sporulation; upon encountering a lesion, the DisA focus arrests at the damaged site and halts c-di-AMP synthesis. In Frankia alni (strain DSM 45986 / CECT 9034 / ACN14a), this protein is DNA integrity scanning protein DisA.